Here is a 78-residue protein sequence, read N- to C-terminus: D-alanyl carrier protein (78 aa).

In terms of domain architecture, Carrier spans 1–78 (MDFNQEVLSV…QIIKQLNELR (78 aa)). Residue serine 36 is modified to O-(pantetheine 4'-phosphoryl)serine.

The protein belongs to the DltC family. In terms of processing, 4'-phosphopantetheine is transferred from CoA to a specific serine of apo-DCP.

The protein localises to the cytoplasm. The protein operates within cell wall biogenesis; lipoteichoic acid biosynthesis. Functionally, carrier protein involved in the D-alanylation of lipoteichoic acid (LTA). The loading of thioester-linked D-alanine onto DltC is catalyzed by D-alanine--D-alanyl carrier protein ligase DltA. The DltC-carried D-alanyl group is further transferred to cell membrane phosphatidylglycerol (PG) by forming an ester bond, probably catalyzed by DltD. D-alanylation of LTA plays an important role in modulating the properties of the cell wall in Gram-positive bacteria, influencing the net charge of the cell wall. This is D-alanyl carrier protein from Bacillus licheniformis (strain ATCC 14580 / DSM 13 / JCM 2505 / CCUG 7422 / NBRC 12200 / NCIMB 9375 / NCTC 10341 / NRRL NRS-1264 / Gibson 46).